The sequence spans 609 residues: MKLSSSSSFGLCILVVFFCFVVIESAKIRIDGYNDEAWIDPYDMLNYDPTTKRMRKSTESESYQNVPTKRREFNSESCDVPKCPDEHECIKKLHILQKEFDEQKSKSTATLSKPVCLPVFKRFLSKLLKETSKLGLPDDGITAMHYDAEVKLSKQSLAEIQKLLNDEDGWTTGAMDEALSQILVQFKLHDYEAWKWRFEDTFHVDVDTVLKVSLIVLIIVAIICTQLWSVVSWFVQFRRMFAVSFFISLIWNWFHLYMLAFAEHKKNIVQVESFNAKCTGLKQLNWQDSLSEWYRRTWTLQDDPCKKYYEVLVVNPILLVPPTKAITITITNFITDPLKHIGEGISEFLRALLKDLPVTLQIPVLIIIILAILIFVYGSAQAAIHQVARFPRLGWRQEQPPPAVGQRQNPQLRAHEEPWEGGDARQPLPMRQDNRGNHVGNRGDQGFRDANAPENREEDRSMDIRQEFSTKRTPVETLQATGNTFPDDETDSQQRTQELDSGANVEEEVKVEEKEKKESFSVDNKEQKETKSPDRSEPITSEPPSSIDVKTVGADQGNEHLMCTKRKWAAQNGFKLQVILCEINSEASADLPEEEECFSFKHPVQETQS.

An N-terminal signal peptide occupies residues Met-1–Ser-25. 3 helical membrane-spanning segments follow: residues Val-212–Val-235, Phe-241–Ala-260, and Val-358–Ala-380. The tract at residues Glu-398–Gly-553 is disordered. Basic and acidic residues-rich tracts occupy residues Glu-454–Pro-474 and Glu-507–Glu-537. Residues Pro-538 to Ile-547 are compositionally biased toward low complexity.

Belongs to the chloride channel MCLC family. As to expression, expressed in the hindbrain, swim bladder and the eye at 1 day post fertilization (dpf) with increased expression at 3 dpf. At 3 dpf, most prominent expression in the retina, with strong expression in the ganglion cell layer, outer nuclear layer and the retinal pigmented epithelium.

Its subcellular location is the endoplasmic reticulum membrane. The protein resides in the golgi apparatus membrane. It is found in the nucleus membrane. Functionally, seems to act as a chloride ion channel. Plays a role in retina development. The protein is Chloride channel CLIC-like protein 1 of Danio rerio (Zebrafish).